Consider the following 839-residue polypeptide: MSVDEKPGSPMYVYESTVHCANILLGLNDQRKKDILCDVTLIVERKEFRAHRAVLAACSEYFWQALVGQTKDDLVVSLPEEVTARGFGPLLQFAYTAKLLLSRENIREVIRCAEFLRMHNLEDSCFSFLQTQLLNREDGLFVCRKDSACQRPQEDHGNSAGEEEEEEETMDSETARMACATDQMLPDPISFEATAIPVAEKEEALLPESEVPTDTKENSEKGALTQYPRYKKYQLACTKNVYSAPSHGTSGFASTFSEDSPGNSLKPGLPMGQIKSEPPSEETEEESITLCLSGDETDIKDRPGDVEMDRKQPSPAPTPSTPTGAACLDRSRSVSSPSCLRSLFGITKGVESTGLPSTSQQPLVRSSACPFNKGISQGDLKTDYTPLAGNYGQPHVGQKDVSNFAMGSPLRGPGPETLCKQEGELDRRSVIFSASACDQPNTPVHSYSAVSNLDKDLSEPVPKSLWVGAGQSLPSSQAYSHSGLMADHLPGRIRPNTSCPVPIKVCPRSPPLETRTRTSSSCSSYSYAEDGSGGSPCSLPLCEFSSSPCSQGARFLATEHQEPGLMGDGMYNQVRPQIKCEQSYGTNSSDESGSFSEADSESCPVQDRGQEVKLPFPVDQITDLPRNDFQMMIKMHKLTSEQLEFIHDIRRRSKNRIAAQRCRKRKLDCIQNLECEIRKLVCEKEKLLSERNHLKACMGELLDNFSCLSQEVCRDIQSPEQIQALHRYCPVLIPMDLPGASVNPPPVGVEQSLAPSPCAVGGSVPCCLEPGAAPPGLPWVPSNTSENCTSGRRLEGSDPGTFSERGPPLEARSQSVTVDFCQEMTEKCTTDEQPRKDYA.

Residues 37–103 (CDVTLIVERK…AYTAKLLLSR (67 aa)) enclose the BTB domain. 2 disordered regions span residues 150-170 (QRPQEDHGNSAGEEEEEEETM) and 247-331 (HGTS…LDRS). Acidic residues predominate over residues 161–170 (GEEEEEEETM). A compositionally biased stretch (polar residues) spans 247–263 (HGTSGFASTFSEDSPGN). Positions 297 to 312 (TDIKDRPGDVEMDRKQ) are enriched in basic and acidic residues. Ser-314 is modified (phosphoserine). The segment covering 321–331 (TPTGAACLDRS) has biased composition (low complexity). Residues Lys-381 and Lys-420 each participate in a glycyl lysine isopeptide (Lys-Gly) (interchain with G-Cter in SUMO2) cross-link. Ser-520 bears the Phosphoserine mark. The tract at residues 582–609 (QSYGTNSSDESGSFSEADSESCPVQDRG) is disordered. Residues 583–597 (SYGTNSSDESGSFSE) show a composition bias toward polar residues. The bZIP domain maps to 645 to 708 (FIHDIRRRSK…GELLDNFSCL (64 aa)). Residues 650-666 (RRRSKNRIAAQRCRKRK) form a basic motif region. The tract at residues 670-677 (IQNLECEI) is leucine-zipper. Positions 778–813 (PWVPSNTSENCTSGRRLEGSDPGTFSERGPPLEARS) are disordered. The span at 781–790 (PSNTSENCTS) shows a compositional bias: polar residues. The Nuclear export signal signature appears at 819–839 (DFCQEMTEKCTTDEQPRKDYA).

This sequence belongs to the bZIP family. CNC subfamily. As to quaternary structure, homodimer; disulfide-linked. Heterodimer of BACH2 and Maf-related transcription factors. In terms of processing, the reversible disulfide bond may provide a mechanism to regulate the activity in oxidative stress responses. Phosphorylation at Ser-520 downstream of the PI-3K pathway promotes nuclear export. Detected in brain and spleen.

The protein localises to the cytoplasm. Its subcellular location is the nucleus. Functionally, transcriptional regulator that acts as a repressor or activator. Binds to Maf recognition elements (MARE). Plays an important role in coordinating transcription activation and repression by MAFK. Induces apoptosis in response to oxidative stress through repression of the antiapoptotic factor HMOX1. Positively regulates the nuclear import of actin. Is a key regulator of adaptive immunity, crucial for the maintenance of regulatory T-cell function and B-cell maturation. This chain is Transcription regulator protein BACH2 (Bach2), found in Mus musculus (Mouse).